The sequence spans 628 residues: Phosphomethylpyrimidine synthase (628 aa).

The span at 1 to 14 shows a compositional bias: polar residues; it reads MTISDIGSQATTHT. The segment at 1 to 37 is disordered; the sequence is MTISDIGSQATTHTPVKASKADALKTPAHRSETDARF. Basic and acidic residues predominate over residues 19 to 37; that stretch reads SKADALKTPAHRSETDARF. Residues Asn-260, Met-289, Tyr-318, His-354, 374 to 376, 415 to 418, and Glu-454 each bind substrate; these read SRG and DGLR. Position 458 (His-458) interacts with Zn(2+). Tyr-481 is a substrate binding site. Residue His-522 coordinates Zn(2+). 3 residues coordinate [4Fe-4S] cluster: Cys-602, Cys-605, and Cys-610.

This sequence belongs to the ThiC family. Homodimer. Requires [4Fe-4S] cluster as cofactor.

It carries out the reaction 5-amino-1-(5-phospho-beta-D-ribosyl)imidazole + S-adenosyl-L-methionine = 4-amino-2-methyl-5-(phosphooxymethyl)pyrimidine + CO + 5'-deoxyadenosine + formate + L-methionine + 3 H(+). It participates in cofactor biosynthesis; thiamine diphosphate biosynthesis. In terms of biological role, catalyzes the synthesis of the hydroxymethylpyrimidine phosphate (HMP-P) moiety of thiamine from aminoimidazole ribotide (AIR) in a radical S-adenosyl-L-methionine (SAM)-dependent reaction. The chain is Phosphomethylpyrimidine synthase from Psychrobacter cryohalolentis (strain ATCC BAA-1226 / DSM 17306 / VKM B-2378 / K5).